The chain runs to 313 residues: Coproporphyrin III ferrochelatase (313 aa).

2 residues coordinate Fe(2+): His-191 and Glu-270.

Belongs to the ferrochelatase family.

Its subcellular location is the cytoplasm. It catalyses the reaction Fe-coproporphyrin III + 2 H(+) = coproporphyrin III + Fe(2+). The protein operates within porphyrin-containing compound metabolism; protoheme biosynthesis. Involved in coproporphyrin-dependent heme b biosynthesis. Catalyzes the insertion of ferrous iron into coproporphyrin III to form Fe-coproporphyrin III. The polypeptide is Coproporphyrin III ferrochelatase (Enterococcus faecalis (strain ATCC 700802 / V583)).